Reading from the N-terminus, the 281-residue chain is 3-mercaptopyruvate sulfurtransferase (281 aa).

Rhodanese domains lie at 17 to 135 (DDPE…LLEE) and 165 to 278 (HENT…LPVE). Arginine 179 is a binding site for substrate. The Cysteine persulfide intermediate role is filled by cysteine 238. Positions 238–244 (CGSGVTA) are substrate specificity.

The protein resides in the cytoplasm. It carries out the reaction 2-oxo-3-sulfanylpropanoate + [thioredoxin]-dithiol = [thioredoxin]-disulfide + hydrogen sulfide + pyruvate + H(+). In terms of biological role, catalyzes the transfer of sulfur from 3-mercaptopyruvate to a thiol-containing acceptor to form an intramolecular disulfide releasing hydrogen sulfide and pyruvate. The protein is 3-mercaptopyruvate sulfurtransferase (sseA) of Escherichia coli O157:H7.